Here is an 88-residue protein sequence, read N- to C-terminus: Small ribosomal subunit protein bS20 (88 aa).

The protein belongs to the bacterial ribosomal protein bS20 family.

Binds directly to 16S ribosomal RNA. The sequence is that of Small ribosomal subunit protein bS20 from Bartonella henselae (strain ATCC 49882 / DSM 28221 / CCUG 30454 / Houston 1) (Rochalimaea henselae).